The chain runs to 130 residues: Riboflavin kinase (130 aa).

Residue 12-17 (GLGVGA) coordinates CDP. The Mg(2+) site is built by threonine 39 and asparagine 41. FMN is bound by residues threonine 90 and glutamate 98. A CDP-binding site is contributed by 103–106 (KNLR).

This sequence belongs to the archaeal riboflavin kinase family. Mg(2+) serves as cofactor.

The catalysed reaction is riboflavin + CTP = CDP + FMN + H(+). Its pathway is cofactor biosynthesis; FMN biosynthesis; FMN from riboflavin (CTP route): step 1/1. Catalyzes the CTP-dependent phosphorylation of riboflavin (vitamin B2) to form flavin mononucleotide (FMN). This is Riboflavin kinase from Staphylothermus marinus (strain ATCC 43588 / DSM 3639 / JCM 9404 / F1).